We begin with the raw amino-acid sequence, 413 residues long: Multifunctional CCA protein (413 aa).

2 residues coordinate ATP: G8 and R11. 2 residues coordinate CTP: G8 and R11. 2 residues coordinate Mg(2+): D21 and D23. ATP is bound by residues R91, R137, and R140. Residues R91, R137, and R140 each coordinate CTP. One can recognise an HD domain in the interval 228–329 (TGIHTLMVLE…VKLFDKADLW (102 aa)).

The protein belongs to the tRNA nucleotidyltransferase/poly(A) polymerase family. Bacterial CCA-adding enzyme type 1 subfamily. In terms of assembly, monomer. Can also form homodimers and oligomers. Requires Mg(2+) as cofactor. It depends on Ni(2+) as a cofactor.

It catalyses the reaction a tRNA precursor + 2 CTP + ATP = a tRNA with a 3' CCA end + 3 diphosphate. The enzyme catalyses a tRNA with a 3' CCA end + 2 CTP + ATP = a tRNA with a 3' CCACCA end + 3 diphosphate. Functionally, catalyzes the addition and repair of the essential 3'-terminal CCA sequence in tRNAs without using a nucleic acid template. Adds these three nucleotides in the order of C, C, and A to the tRNA nucleotide-73, using CTP and ATP as substrates and producing inorganic pyrophosphate. tRNA 3'-terminal CCA addition is required both for tRNA processing and repair. Also involved in tRNA surveillance by mediating tandem CCA addition to generate a CCACCA at the 3' terminus of unstable tRNAs. While stable tRNAs receive only 3'-terminal CCA, unstable tRNAs are marked with CCACCA and rapidly degraded. This is Multifunctional CCA protein from Shewanella loihica (strain ATCC BAA-1088 / PV-4).